The primary structure comprises 1125 residues: Telomerase reverse transcriptase (1125 aa).

Residues 1 to 234 are RNA-interacting domain 1; sequence MPRAPRCRAV…ARRRRSSARG (234 aa). The segment at 58–199 is GQ motif; that stretch reads VPWDAQPPPA…RQVGGTRAGF (142 aa). Residues 137 to 141 are required for regulating specificity for telomeric DNA and for processivity for primer elongation; sequence WGLLL. The segment at 186–308 is disordered; the sequence is RRPTRQVGGT…WRLSPSEGEP (123 aa). Positions 224–243 are enriched in basic residues; that stretch reads GARRRRSSARGRLPPAKRPR. Positions 226-244 match the Bipartite nuclear localization signal motif; sequence RRRRSSARGRLPPAKRPRR. Ser231 is modified (phosphoserine; by PKB/AKT1). Residues 235-312 are linker; that stretch reads RLPPAKRPRR…PSEGEPGAGA (78 aa). Composition is skewed to basic and acidic residues over residues 244 to 253 and 269 to 279; these read RGLEPGRDLE and DAAEAKSRKGD. Residues 290 to 531 are required for oligomerization; the sequence is GERGVGSASW…VPAAEHRQRE (242 aa). The RNA-interacting domain 2 stretch occupies residues 313-543; sequence CAETKRFLYC…LGRFLHWLMG (231 aa). Residues 316 to 321 carry the TFLY; involved in RNA binding motif; it reads TKRFLY. The QFP motif stretch occupies residues 364 to 514; sequence PRRPRRLPAR…MKVQDCAWLR (151 aa). The tract at residues 385–405 is CP motif; it reads LGNHARSPYGALLRAHCPLPA. Position 450 is a phosphoserine; by DYRK2 (Ser450). One can recognise a Reverse transcriptase domain in the interval 598–928; that stretch reads EVRQHQEARP…CLFPWCGLLL (331 aa). At Tyr700 the chain carries Phosphotyrosine; by SRC-type Tyr-kinases. Mg(2+) contacts are provided by Asp705, Asp861, and Asp862. Residues 907–921 form a required for oligomerization region; that stretch reads LGGAAPLQLPAHCLF. Residues 923–927 form a primer grip sequence region; that stretch reads WCGLL. Residues 929 to 1125 are CTE; it reads DTRTLEVHGD…LTADFKTILD (197 aa).

This sequence belongs to the reverse transcriptase family. Telomerase subfamily. Catalytic component of the telomerase holoenzyme complex composed of one molecule of TERT, one molecule of WRAP53/TCAB1, two molecules of H/ACA ribonucleoprotein complex subunits DKC1, NOP10, NHP2 and GAR1, and a telomerase RNA template component (TERC). The telomerase holoenzyme complex is associated with TEP1, SMG6/EST1A and POT1. The molecular chaperone HSP90/P23 complex is required for correct assembly and stabilization of the active telomerase. Interacts directly with HSP90A and PTGES3. Interacts with HSPA1A; the interaction occurs in the absence of TERC and dissociates once the complex has formed. Interacts with RAN; the interaction promotes nuclear export of TERT. Interacts with XPO1. Interacts with PTPN11; the interaction retains TERT in the nucleus. Interacts with NCL (via RRM1 and C-terminal RRM4/Arg/Gly-rich domains); the interaction is important for nucleolar localization of TERT. Interacts with SMARCA4 (via the bromodomain); the interaction regulates Wnt-mediated signaling. Interacts with MCRS1 (isoform MCRS2); the interaction inhibits in vitro telomerase activity. Interacts with PIF1; the interaction has no effect on the elongation activity of TERT. Interacts with PML; the interaction recruits TERT to PML bodies and inhibits telomerase activity. Interacts with GNL3L. Interacts with isoform 1 and isoform 2 of NVL. Interacts with DHX36. Interacts with ATF7. Phosphorylation at Tyr-700 under oxidative stress leads to translocation of TERT to the cytoplasm and reduces its antiapoptotic activity. Dephosphorylated by SHP2/PTPN11 leading to nuclear retention. Phosphorylation at Ser-231 by the AKT pathway promotes nuclear location. Phosphorylation at the G2/M phase at Ser-450 by DYRK2 promotes ubiquitination by the EDVP complex and degradation. In terms of processing, ubiquitinated by the EDVP complex, a E3 ligase complex following phosphorylation at Ser-450 by DYRK2. Ubiquitinated leads to proteasomal degradation.

The protein resides in the nucleus. It localises to the nucleolus. It is found in the nucleoplasm. Its subcellular location is the chromosome. The protein localises to the telomere. The protein resides in the cytoplasm. It localises to the PML body. It catalyses the reaction DNA(n) + a 2'-deoxyribonucleoside 5'-triphosphate = DNA(n+1) + diphosphate. Telomerase is a ribonucleoprotein enzyme essential for the replication of chromosome termini in most eukaryotes. Active in progenitor and cancer cells. Inactive, or very low activity, in normal somatic cells. Catalytic component of the teleromerase holoenzyme complex whose main activity is the elongation of telomeres by acting as a reverse transcriptase that adds simple sequence repeats to chromosome ends by copying a template sequence within the RNA component of the enzyme. Catalyzes the RNA-dependent extension of 3'-chromosomal termini with the 6-nucleotide telomeric repeat unit, 5'-TTAGGG-3'. The catalytic cycle involves primer binding, primer extension and release of product once the template boundary has been reached or nascent product translocation followed by further extension. More active on substrates containing 2 or 3 telomeric repeats. Telomerase activity is regulated by a number of factors including telomerase complex-associated proteins, chaperones and polypeptide modifiers. Modulates Wnt signaling. Plays important roles in aging and antiapoptosis. The chain is Telomerase reverse transcriptase (TERT) from Bos taurus (Bovine).